Consider the following 208-residue polypeptide: Ypt/Rab-type GTPase ypt71 (208 aa).

GTP is bound by residues 17–23 (SGVGKTC), 33–40 (FSREYKAT), glycine 66, 124–127 (NQID), and 158–160 (SAK). An Effector region motif is present at residues 37 to 45 (YKATIGADF). Residues cysteine 206 and cysteine 208 are each lipidated (S-geranylgeranyl cysteine). At cysteine 208 the chain carries Cysteine methyl ester.

It belongs to the small GTPase superfamily. Rab family.

It localises to the vacuole membrane. Its activity is regulated as follows. Rab activation is generally mediated by a guanine exchange factor (GEF), while inactivation through hydrolysis of bound GTP is catalyzed by a GTPase activating protein (GAP). Its function is as follows. Ypt/Rab-type GTPases are key regulators of membrane trafficking and intracellular vesicular transport. They act as molecular switches that convert between GTP-bound and GDP-bound states, and regulate virtually all steps of membrane traffic from the formation of the transport vesicle at the donor membrane to its fusion at the target membrane. In the GDP-bound state, Ypt proteins are predominantly cytosolic, solubilized through the interaction with a GDP dissociation inhibitor (GDI). In the GTP-bound state, the proteins are membrane bound and interact with specific effector proteins that select cargo, promote vesicle movement, or verify the correct site of fusion. Act antagonistically to ypt7 in regulating vacuolar morphology, promoting vacuolar fission. This is Ypt/Rab-type GTPase ypt71 (ypt71) from Schizosaccharomyces pombe (strain 972 / ATCC 24843) (Fission yeast).